Reading from the N-terminus, the 72-residue chain is Small proline-rich protein 2A (72 aa).

Residues 1–11 are compositionally biased toward low complexity; it reads MSYQQQQCKQP. The disordered stretch occupies residues 1 to 20; the sequence is MSYQQQQCKQPCQPPPVCPT. 3 repeat units span residues 21 to 29, 30 to 38, and 39 to 47. The tract at residues 21–47 is 3 X 9 AA tandem repeats of P-K-C-P-[EQ]-P-C-P-P; that stretch reads PKCPEPCPPPKCPEPCPPPKCPQPCPP. The interval 42-72 is disordered; it reads PQPCPPQQCQQKYPPVTPSPPCQSKYPPKSK.

This sequence belongs to the cornifin (SPRR) family. Post-translationally, forms five pairs of intrachain disulfide bonds. Expressed in intestine; selectively expressed in goblet cells.

Its subcellular location is the secreted. It localises to the extracellular space. It is found in the cytoplasmic vesicle. The protein resides in the secretory vesicle. In terms of biological role, gut bactericidal protein that selectively kills Gram-positive bacteria by binding to negatively charged lipids on bacterial membranes, leading to bacterial membrane permeabilization and disruption. Specifically binds lipids bearing negatively charged headgroups, such as phosphatidic acid, phosphatidylserine (PS), cardiolipin (CL), and phosphatidylinositol phosphates, but not to zwitterionic or neutral lipids. Induced by type-2 cytokines in response to helminth infection and is required to protect against helminth-induced bacterial invasion of intestinal tissue. May also be involved in the development of the cornified envelope of squamous epithelia; however, additional evidences are required to confirm this result in vivo. This is Small proline-rich protein 2A from Homo sapiens (Human).